The chain runs to 381 residues: MAINIRKTHPLLKIMNHALVDLPAPSNISLWWNFGSLLGLCLIIQILTGLFLAMHYTADISMAFSSVVHICRDVNYGWLIRNIHANGASLFFICIYLHIARGLYYGSYLYKETWNIGVILLFLLMATAFVGYVLPWGQMSFWGATVITNLLSAFPYIGDILVQWIWGGFSVDNATLTRFFAFHFLLPFLILALTVIHLLFLHETGSNNPLGINSNADKISFHPYFSYKDLLGFFIMIFFLATLALFMPNLLGDAENFIPANPLVTPPHIKPEWYFLFAYAILRSIPNKLGGVLALLFSIFILMLVPLLHTSKQRSTIFRPMTQIFFWLLVANFLILTWIGGQPVEQPFMMVGQIASISYFALFLIIMPFAGWCENKILSLN.

A run of 4 helical transmembrane segments spans residues 34–54 (FGSLLGLCLIIQILTGLFLAM), 78–99 (WLIRNIHANGASLFFICIYLHI), 114–134 (WNIGVILLFLLMATAFVGYVL), and 179–199 (FFAFHFLLPFLILALTVIHLL). Heme b contacts are provided by histidine 84 and histidine 98. Positions 183 and 197 each coordinate heme b. A ubiquinone is bound at residue histidine 202. A run of 4 helical transmembrane segments spans residues 227 to 247 (YKDLLGFFIMIFFLATLALFM), 289 to 309 (LGGVLALLFSIFILMLVPLLH), 321 to 341 (MTQIFFWLLVANFLILTWIGG), and 348 to 368 (FMMVGQIASISYFALFLIIMP).

The protein belongs to the cytochrome b family. As to quaternary structure, the cytochrome bc1 complex contains 3 respiratory subunits (MT-CYB, CYC1 and UQCRFS1), 2 core proteins (UQCRC1 and UQCRC2) and probably 6 low-molecular weight proteins. Heme b is required as a cofactor.

The protein resides in the mitochondrion inner membrane. Component of the ubiquinol-cytochrome c reductase complex (complex III or cytochrome b-c1 complex) that is part of the mitochondrial respiratory chain. The b-c1 complex mediates electron transfer from ubiquinol to cytochrome c. Contributes to the generation of a proton gradient across the mitochondrial membrane that is then used for ATP synthesis. This chain is Cytochrome b (mt-cyb), found in Prionace glauca (Blue shark).